A 67-amino-acid chain; its full sequence is Kappa-conotoxin-like Em11.8 (67 aa).

The first 26 residues, Met-1–Thr-26, serve as a signal peptide directing secretion. Cystine bridges form between Cys-29-Cys-43, Cys-36-Cys-48, Cys-42-Cys-51, and Cys-47-Cys-55. A Phenylalanine amide modification is found at Phe-59. Positions Ala-63–Glu-67 are excised as a propeptide.

The protein belongs to the conotoxin I2 superfamily. Expressed by the venom duct.

The protein localises to the secreted. Its function is as follows. Inhibits the vertebrate voltage-gated potassium channels Kv1.1/KCNA1 and Kv1.3/KCNA3. The polypeptide is Kappa-conotoxin-like Em11.8 (Conus emaciatus (False virgin cone)).